Consider the following 398-residue polypeptide: tRNA(Ile)-lysidine synthase (398 aa).

Position 17 to 22 (17 to 22) interacts with ATP; the sequence is SGGPDS.

It belongs to the tRNA(Ile)-lysidine synthase family.

Its subcellular location is the cytoplasm. It catalyses the reaction cytidine(34) in tRNA(Ile2) + L-lysine + ATP = lysidine(34) in tRNA(Ile2) + AMP + diphosphate + H(+). Functionally, ligates lysine onto the cytidine present at position 34 of the AUA codon-specific tRNA(Ile) that contains the anticodon CAU, in an ATP-dependent manner. Cytidine is converted to lysidine, thus changing the amino acid specificity of the tRNA from methionine to isoleucine. The chain is tRNA(Ile)-lysidine synthase from Mesoplasma florum (strain ATCC 33453 / NBRC 100688 / NCTC 11704 / L1) (Acholeplasma florum).